The sequence spans 167 residues: Mediator of RNA polymerase II transcription subunit 10 (167 aa).

Positions 141–158 (TGGRTVGGEGEGAGQGEG) are enriched in gly residues. Positions 141 to 167 (TGGRTVGGEGEGAGQGEGGEGRGEGGN) are disordered.

Belongs to the Mediator complex subunit 10 family. In terms of assembly, component of the Mediator complex.

It is found in the nucleus. Its function is as follows. Component of the Mediator complex, a coactivator involved in the regulated transcription of nearly all RNA polymerase II-dependent genes. Mediator functions as a bridge to convey information from gene-specific regulatory proteins to the basal RNA polymerase II transcription machinery. Mediator is recruited to promoters by direct interactions with regulatory proteins and serves as a scaffold for the assembly of a functional preinitiation complex with RNA polymerase II and the general transcription factors. The chain is Mediator of RNA polymerase II transcription subunit 10 (NUT2) from Chaetomium globosum (strain ATCC 6205 / CBS 148.51 / DSM 1962 / NBRC 6347 / NRRL 1970) (Soil fungus).